The following is a 554-amino-acid chain: Glucose-6-phosphate isomerase (554 aa).

Glu-359 acts as the Proton donor in catalysis. Active-site residues include His-390 and Lys-518.

Belongs to the GPI family.

It is found in the cytoplasm. It catalyses the reaction alpha-D-glucose 6-phosphate = beta-D-fructose 6-phosphate. It participates in carbohydrate biosynthesis; gluconeogenesis. Its pathway is carbohydrate degradation; glycolysis; D-glyceraldehyde 3-phosphate and glycerone phosphate from D-glucose: step 2/4. Its function is as follows. Catalyzes the reversible isomerization of glucose-6-phosphate to fructose-6-phosphate. This chain is Glucose-6-phosphate isomerase, found in Pseudomonas fluorescens.